Here is a 75-residue protein sequence, read N- to C-terminus: Small ribosomal subunit protein bS18 (75 aa).

Belongs to the bacterial ribosomal protein bS18 family. Part of the 30S ribosomal subunit. Forms a tight heterodimer with protein bS6.

In terms of biological role, binds as a heterodimer with protein bS6 to the central domain of the 16S rRNA, where it helps stabilize the platform of the 30S subunit. The protein is Small ribosomal subunit protein bS18 of Vibrio atlanticus (strain LGP32) (Vibrio splendidus (strain Mel32)).